We begin with the raw amino-acid sequence, 1297 residues long: Cingulin-like protein 1 (1297 aa).

The head stretch occupies residues methionine 1–threonine 550. Positions alanine 37 to glycine 51 match the ZIM motif. A phosphoserine mark is found at serine 113, serine 203, and serine 257. Disordered stretches follow at residues asparagine 161–aspartate 208, glycine 245–serine 306, lysine 364–phenylalanine 396, and glutamine 428–valine 467. Residues tyrosine 197–serine 206 show a composition bias toward polar residues. Over residues glutamate 268–aspartate 283 the composition is skewed to basic and acidic residues. Serine 284, serine 298, and serine 299 each carry phosphoserine. Over residues serine 297 to serine 306 the composition is skewed to low complexity. The segment covering leucine 367 to arginine 378 has biased composition (basic residues). Basic and acidic residues predominate over residues isoleucine 379–serine 389. Residues serine 389 and serine 392 each carry the phosphoserine modification. Phosphoserine is present on serine 482. The segment at serine 586–leucine 608 is disordered. Positions alanine 592 to leucine 608 are enriched in polar residues. A coiled-coil region spans residues glutamate 604–lysine 1251. Serine 678 and serine 704 each carry phosphoserine. A tail region spans residues serine 1259–isoleucine 1297.

This sequence belongs to the cingulin family. As to quaternary structure, homodimer or oligomer. Interacts with CD2AP and SH3BP1; probably part of a complex at cell junctions. In terms of tissue distribution, widely expressed. Highly expressed in the kidney and lung.

The protein resides in the cell junction. It localises to the tight junction. In terms of biological role, may be involved in anchoring the apical junctional complex, especially tight junctions, to actin-based cytoskeletons. The chain is Cingulin-like protein 1 from Mus musculus (Mouse).